The following is a 193-amino-acid chain: Segregation and condensation protein B (193 aa).

The protein belongs to the ScpB family. As to quaternary structure, homodimer. Homodimerization may be required to stabilize the binding of ScpA to the Smc head domains. Component of a cohesin-like complex composed of ScpA, ScpB and the Smc homodimer, in which ScpA and ScpB bind to the head domain of Smc. The presence of the three proteins is required for the association of the complex with DNA.

The protein resides in the cytoplasm. Functionally, participates in chromosomal partition during cell division. May act via the formation of a condensin-like complex containing Smc and ScpA that pull DNA away from mid-cell into both cell halves. In Clostridium botulinum (strain 657 / Type Ba4), this protein is Segregation and condensation protein B.